We begin with the raw amino-acid sequence, 99 residues long: MSRKCAVTGKGVQTGNNVSHANNKSRRRWLPNLQETSLLSDTLGRMVRLRLSTNGIRTIEHKGGLDAALLDIPDARLNQDARRVKKQIQKAIEAKKATA.

The tract at residues 1–25 is disordered; it reads MSRKCAVTGKGVQTGNNVSHANNKS. A compositionally biased stretch (polar residues) spans 11-22; it reads GVQTGNNVSHAN.

The protein belongs to the bacterial ribosomal protein bL28 family.

In Rhodospirillum centenum (strain ATCC 51521 / SW), this protein is Large ribosomal subunit protein bL28.